Reading from the N-terminus, the 122-residue chain is uncharacterized protein (122 aa).

A helical membrane pass occupies residues 93 to 113 (ILRICIVFLSLKIYTLTLVII).

The protein localises to the membrane. This is an uncharacterized protein from Saccharomyces cerevisiae (strain ATCC 204508 / S288c) (Baker's yeast).